The following is a 499-amino-acid chain: Sensor histidine kinase PdtaS (499 aa).

A GAF region spans residues 4 to 149 (LGDLLAEHTM…PLEGAYLDCA (146 aa)). Residues 178–289 (DGFIRLNEGG…TEVKRRDRAL (112 aa)) are PAS-like. One can recognise a Histidine kinase domain in the interval 298–493 (EIHHRVKNNL…DVVLRVPIGR (196 aa)). Histidine 301 bears the Phosphohistidine; by autocatalysis mark.

Autophosphorylated.

Its subcellular location is the cytoplasm. It carries out the reaction ATP + protein L-histidine = ADP + protein N-phospho-L-histidine.. In terms of biological role, member of the two-component regulatory system PdtaR/PdtaS. This two-component system plays an essential role in mycobacterial adaptation to poor nutrient conditions. Nutrient deprivation results in increasing intracellular concentrations of cyclic diguanosine monophosphate (c-di-GMP), which binds to the PdtaS sensor and promotes its autophosphorylation, leading to the activation of the signaling cascade. The phosphate group is then transferred to PdtaR. This is Sensor histidine kinase PdtaS from Mycolicibacterium smegmatis (strain ATCC 700084 / mc(2)155) (Mycobacterium smegmatis).